Reading from the N-terminus, the 252-residue chain is Protein GrpE (252 aa).

A compositionally biased stretch (polar residues) spans 1 to 22 (MHNPQSRGHNLSQAMSDQTVTN). A disordered region spans residues 1–70 (MHNPQSRGHN…EEDQASEATS (70 aa)).

It belongs to the GrpE family. Homodimer.

It is found in the cytoplasm. Its function is as follows. Participates actively in the response to hyperosmotic and heat shock by preventing the aggregation of stress-denatured proteins, in association with DnaK and GrpE. It is the nucleotide exchange factor for DnaK and may function as a thermosensor. Unfolded proteins bind initially to DnaJ; upon interaction with the DnaJ-bound protein, DnaK hydrolyzes its bound ATP, resulting in the formation of a stable complex. GrpE releases ADP from DnaK; ATP binding to DnaK triggers the release of the substrate protein, thus completing the reaction cycle. Several rounds of ATP-dependent interactions between DnaJ, DnaK and GrpE are required for fully efficient folding. This chain is Protein GrpE, found in Thermosynechococcus vestitus (strain NIES-2133 / IAM M-273 / BP-1).